A 28-amino-acid polypeptide reads, in one-letter code: Short cationic peptide-1c (28 aa).

A Glutamic acid 1-amide modification is found at Glu-28.

Expressed by the venom gland.

The protein resides in the secreted. The chain is Short cationic peptide-1c from Cupiennius salei (American wandering spider).